The chain runs to 142 residues: MAIIIGSDEAGKRLKEVIKSYLLDNKYDVVDVTEGQEVDFVDATLAVAKDVQSQEGNLGIVIDAFGTGSFMVATKIKGMIAAEVSDERSGYMTRGHNNSRMITMGSEIVGDTLAKNVVKGFVEGKYDGGRHQIRVDMLNKMC.

The protein belongs to the LacAB/RpiB family. As to quaternary structure, heteromultimeric protein consisting of LacA and LacB.

It carries out the reaction aldehydo-D-galactose 6-phosphate = keto-D-tagatose 6-phosphate. The protein operates within carbohydrate metabolism; D-galactose 6-phosphate degradation; D-tagatose 6-phosphate from D-galactose 6-phosphate: step 1/1. The sequence is that of Galactose-6-phosphate isomerase subunit LacA from Staphylococcus aureus.